The sequence spans 475 residues: Stromelysin-1 (475 aa).

The first 17 residues, 1–17 (MKGLPVLLWLCTAVCSS), serve as a signal peptide directing secretion. Residues 18 to 97 (YPLHGSEEDA…PRCGVPDVGG (80 aa)) constitute a propeptide, activation peptide. Residues 88–95 (PRCGVPDV) carry the Cysteine switch motif. Cysteine 90 is a binding site for Zn(2+). Asparagine 118 carries N-linked (GlcNAc...) asparagine glycosylation. Positions 122 and 156 each coordinate Ca(2+). Residues histidine 166 and aspartate 168 each contribute to the Zn(2+) site. 4 residues coordinate Ca(2+): aspartate 173, glycine 174, glycine 176, and valine 178. Histidine 181 is a Zn(2+) binding site. 3 residues coordinate Ca(2+): glycine 188, asparagine 190, and aspartate 192. Zn(2+) is bound at residue histidine 194. Aspartate 196, aspartate 197, and glutamate 199 together coordinate Ca(2+). Histidine 216 is a binding site for Zn(2+). Glutamate 217 is an active-site residue. Residues histidine 220 and histidine 226 each contribute to the Zn(2+) site. 4 Hemopexin repeats span residues 285-334 (LPMC…WPSL), 335-381 (PSNM…GLPE), 383-431 (VQKI…FPGI), and 432-475 (GTKV…WFNC). Cysteine 288 and cysteine 475 form a disulfide bridge. Aspartate 295 provides a ligand contact to Ca(2+). Ca(2+) is bound by residues aspartate 387 and aspartate 436.

This sequence belongs to the peptidase M10A family. Ca(2+) serves as cofactor. Zn(2+) is required as a cofactor.

It is found in the secreted. The protein localises to the extracellular space. The protein resides in the extracellular matrix. It catalyses the reaction Preferential cleavage where P1', P2' and P3' are hydrophobic residues.. With respect to regulation, inhibited by a synthetic peptide corresponding to the inhibitory cysteine switch motif. Inhibited by ethylenediaminetetraacetic acid (EDTA), 1,10-pheanthroline, 2-mecaptoethanol, dithiothreitol and metalloproteinase inhibitor protein TIMP. Functionally, can degrade fibronectin, laminin, gelatins of type I, III, IV, and V; collagens III, IV, X, and IX, and cartilage proteoglycans. Activates procollagenase. Metalloproteinase with a rather broad substrate specificity that can degrade fibronectin, laminin, gelatins of type I, III, IV, and V; collagens III, IV, X, and IX, and cartilage proteoglycans. Activates different molecules including growth factors, plasminogen or other matrix metalloproteinases such as MMP9. Once released into the extracellular matrix (ECM), the inactive pro-enzyme is activated by the plasmin cascade signaling pathway. Also acts intracellularly. For example, in dopaminergic neurons, gets activated by the serine protease HTRA2 upon stress and plays a pivotal role in DA neuronal degeneration by mediating microglial activation and alpha-synuclein/SNCA cleavage. In addition, plays a role in immune response and possesses antiviral activity against various viruses. Mechanistically, translocates from the cytoplasm into the cell nucleus upon virus infection to influence NF-kappa-B activities. The protein is Stromelysin-1 (Mmp3) of Rattus norvegicus (Rat).